The primary structure comprises 554 residues: Glucose-6-phosphate isomerase (554 aa).

The active-site Proton donor is E359. Active-site residues include H390 and K518.

This sequence belongs to the GPI family.

Its subcellular location is the cytoplasm. The catalysed reaction is alpha-D-glucose 6-phosphate = beta-D-fructose 6-phosphate. It participates in carbohydrate biosynthesis; gluconeogenesis. Its pathway is carbohydrate degradation; glycolysis; D-glyceraldehyde 3-phosphate and glycerone phosphate from D-glucose: step 2/4. Catalyzes the reversible isomerization of glucose-6-phosphate to fructose-6-phosphate. This chain is Glucose-6-phosphate isomerase, found in Pseudomonas putida (strain W619).